The chain runs to 206 residues: Small ribosomal subunit protein uS4 (206 aa).

The segment covering 25-39 (DKLLDRKPNGPGKER) has biased composition (basic and acidic residues). Residues 25–49 (DKLLDRKPNGPGKERGARKRGKTSV) are disordered. The S4 RNA-binding domain occupies 95–157 (QRLDNTIYRM…KGIQNLIRHN (63 aa)).

It belongs to the universal ribosomal protein uS4 family. Part of the 30S ribosomal subunit. Contacts protein S5. The interaction surface between S4 and S5 is involved in control of translational fidelity.

One of the primary rRNA binding proteins, it binds directly to 16S rRNA where it nucleates assembly of the body of the 30S subunit. Functionally, with S5 and S12 plays an important role in translational accuracy. The polypeptide is Small ribosomal subunit protein uS4 (Treponema denticola (strain ATCC 35405 / DSM 14222 / CIP 103919 / JCM 8153 / KCTC 15104)).